Reading from the N-terminus, the 361-residue chain is Phosphoserine aminotransferase (361 aa).

An L-glutamate-binding site is contributed by Arg42. Residues 76–77, Trp102, Thr153, Asp173, and Gln196 each bind pyridoxal 5'-phosphate; that span reads AR. Lys197 carries the post-translational modification N6-(pyridoxal phosphate)lysine. 238–239 is a pyridoxal 5'-phosphate binding site; the sequence is NT.

It belongs to the class-V pyridoxal-phosphate-dependent aminotransferase family. SerC subfamily. In terms of assembly, homodimer. It depends on pyridoxal 5'-phosphate as a cofactor.

It localises to the cytoplasm. The catalysed reaction is O-phospho-L-serine + 2-oxoglutarate = 3-phosphooxypyruvate + L-glutamate. The enzyme catalyses 4-(phosphooxy)-L-threonine + 2-oxoglutarate = (R)-3-hydroxy-2-oxo-4-phosphooxybutanoate + L-glutamate. It functions in the pathway amino-acid biosynthesis; L-serine biosynthesis; L-serine from 3-phospho-D-glycerate: step 2/3. It participates in cofactor biosynthesis; pyridoxine 5'-phosphate biosynthesis; pyridoxine 5'-phosphate from D-erythrose 4-phosphate: step 3/5. Functionally, catalyzes the reversible conversion of 3-phosphohydroxypyruvate to phosphoserine and of 3-hydroxy-2-oxo-4-phosphonooxybutanoate to phosphohydroxythreonine. This Pectobacterium atrosepticum (strain SCRI 1043 / ATCC BAA-672) (Erwinia carotovora subsp. atroseptica) protein is Phosphoserine aminotransferase.